A 221-amino-acid polypeptide reads, in one-letter code: Octanoyltransferase (221 aa).

The 183-residue stretch at 31-213 (DKSADEIWLV…HFVTILGYNK (183 aa)) folds into the BPL/LPL catalytic domain. Substrate contacts are provided by residues 70-77 (RGGQITYH), 142-144 (SLG), and 155-157 (GLA). Residue cysteine 173 is the Acyl-thioester intermediate of the active site.

It belongs to the LipB family.

The protein resides in the cytoplasm. It carries out the reaction octanoyl-[ACP] + L-lysyl-[protein] = N(6)-octanoyl-L-lysyl-[protein] + holo-[ACP] + H(+). The protein operates within protein modification; protein lipoylation via endogenous pathway; protein N(6)-(lipoyl)lysine from octanoyl-[acyl-carrier-protein]: step 1/2. In terms of biological role, catalyzes the transfer of endogenously produced octanoic acid from octanoyl-acyl-carrier-protein onto the lipoyl domains of lipoate-dependent enzymes. Lipoyl-ACP can also act as a substrate although octanoyl-ACP is likely to be the physiological substrate. The polypeptide is Octanoyltransferase (Mannheimia succiniciproducens (strain KCTC 0769BP / MBEL55E)).